Reading from the N-terminus, the 277-residue chain is Thiazole synthase (277 aa).

Lysine 116 (schiff-base intermediate with DXP) is an active-site residue. Residues glycine 177, 203–204, and 225–226 each bind 1-deoxy-D-xylulose 5-phosphate; these read AG and NT.

The protein belongs to the ThiG family. Homotetramer. Forms heterodimers with either ThiH or ThiS.

Its subcellular location is the cytoplasm. It carries out the reaction [ThiS sulfur-carrier protein]-C-terminal-Gly-aminoethanethioate + 2-iminoacetate + 1-deoxy-D-xylulose 5-phosphate = [ThiS sulfur-carrier protein]-C-terminal Gly-Gly + 2-[(2R,5Z)-2-carboxy-4-methylthiazol-5(2H)-ylidene]ethyl phosphate + 2 H2O + H(+). The protein operates within cofactor biosynthesis; thiamine diphosphate biosynthesis. In terms of biological role, catalyzes the rearrangement of 1-deoxy-D-xylulose 5-phosphate (DXP) to produce the thiazole phosphate moiety of thiamine. Sulfur is provided by the thiocarboxylate moiety of the carrier protein ThiS. In vitro, sulfur can be provided by H(2)S. The chain is Thiazole synthase from Thermosynechococcus vestitus (strain NIES-2133 / IAM M-273 / BP-1).